The chain runs to 138 residues: MPWRTALKVALAAGEAVTKALTRAVRDEIRQTQQAAARHAAATGQSPSETKENANANAKLGISLEESLQILNVKTPLNREDVEKHYEHLFAINDKAKGGTFYLQSKVYRAKERIDEELSRLEQKSEENKEQQKENSKE.

Residues 32–43 are compositionally biased toward low complexity; the sequence is TQQAAARHAAAT. Disordered regions lie at residues 32–58 and 118–138; these read TQQA…NANA and LSRL…NSKE. Residues 44–56 are compositionally biased toward polar residues; that stretch reads GQSPSETKENANA. A J-like region spans residues 66–119; it reads ESLQILNVKTPLNREDVEKHYEHLFAINDKAKGGTFYLQSKVYRAKERIDEELS.

It belongs to the TIM16/PAM16 family. As to quaternary structure, probable component of the PAM complex at least composed of a mitochondrial HSP70 protein, GrpE, tim-44, tim-16 and tim-14. Associates with the TIM23 complex.

The protein localises to the mitochondrion inner membrane. Functionally, regulates ATP-dependent protein translocation into the mitochondrial matrix. This chain is Mitochondrial import inner membrane translocase subunit tim-16, found in Caenorhabditis briggsae.